The sequence spans 1019 residues: Macrophage colony-stimulating factor 1 receptor 2 (1019 aa).

The signal sequence occupies residues 1–18; the sequence is MKSYCLLLSITLSCCCSA. Topologically, residues 19-576 are extracellular; that stretch reads EDLPDPPSIH…LREHNSAFMS (558 aa). 3 consecutive Ig-like C2-type domains span residues 37-109, 106-212, and 224-312; these read QAEA…IHLY, IHLY…LLVA, and QNKA…LIVL. C52 and C92 are disulfide-bonded. N96, N148, N169, N249, N342, N346, N355, N369, N379, N408, N422, N429, N433, and N514 each carry an N-linked (GlcNAc...) asparagine glycan. 2 cysteine pairs are disulfide-bonded: C139/C193 and C239/C294. Ig-like C2-type domains follow at residues 383 to 474 and 487 to 567; these read STTV…LRIY and TLTC…VFHL. An intrachain disulfide couples C490 to C552. Residues 577–597 traverse the membrane as a helical segment; sequence ALIGAGSTAAILFLLLLVVFY. Residues 598-1019 are Cytoplasmic-facing; the sequence is KWRQKPKYEI…LSVTNIYQLS (422 aa). Residues 601 to 633 are regulatory juxtamembrane domain; it reads QKPKYEIRWKIIESTEGNHYTFVDPTLLPYNYK. Y620 is modified (phosphotyrosine; by autocatalysis). In terms of domain architecture, Protein kinase spans 641–963; sequence LRLGAVLGSG…MICQLIDRLL (323 aa). ATP-binding positions include 647-655 and K674; that span reads LGSGAFGKV. A phosphotyrosine; by autocatalysis mark is found at Y756 and Y778. D827 serves as the catalytic Proton acceptor. The interval 845–867 is activation loop; it reads DFGLARDIQNDDSYIVQGNARLP. Residues Y858 and Y974 each carry the phosphotyrosine; by autocatalysis modification. The tract at residues 970-1001 is disordered; that stretch reads NHQSYSNINETKKDDFKGGKSQRRGEEEEQRR. Basic and acidic residues predominate over residues 979–1001; it reads ETKKDDFKGGKSQRRGEEEEQRR. Residue Y1016 is modified to Phosphotyrosine; by autocatalysis.

This sequence belongs to the protein kinase superfamily. Tyr protein kinase family. CSF-1/PDGF receptor subfamily. As to quaternary structure, monomer. Homodimer. Interacts with CSF1. Autophosphorylated in response to CSF1 binding. autophosphorylation, leading to its degradation. In terms of processing, ubiquitinated. Becomes rapidly polyubiquitinated after autophosphorylation, leading to its degradation.

The protein resides in the cell membrane. It carries out the reaction L-tyrosyl-[protein] + ATP = O-phospho-L-tyrosyl-[protein] + ADP + H(+). With respect to regulation, present in an inactive conformation in the absence of bound ligand. CSF1 binding leads to dimerization and activation by autophosphorylation on tyrosine residues. Tyrosine-protein kinase that acts as a cell-surface receptor for CSF1 and plays an essential role in the regulation of survival, proliferation and differentiation of hematopoietic precursor cells, especially mononuclear phagocytes, such as macrophages and monocytes. Plays an important role in innate immunity and in inflammatory processes. Plays an important role in the regulation of osteoclast proliferation and differentiation, the regulation of bone resorption, and is required for normal bone development. Promotes reorganization of the actin cytoskeleton, regulates formation of membrane ruffles, cell adhesion and cell migration. Activates several signaling pathways in response to ligand binding. The sequence is that of Macrophage colony-stimulating factor 1 receptor 2 (csf1r2) from Takifugu rubripes (Japanese pufferfish).